Consider the following 670-residue polypeptide: DNA ligase (670 aa).

NAD(+) is bound by residues 32–36 (DSEYD), 81–82 (SL), and glutamate 114. Lysine 116 acts as the N6-AMP-lysine intermediate in catalysis. Residues arginine 137, glutamate 174, lysine 291, and lysine 315 each contribute to the NAD(+) site. Residues cysteine 409, cysteine 412, cysteine 427, and cysteine 433 each contribute to the Zn(2+) site. Residues 592–670 (ASENLFKDKT…EEEFLAQITR (79 aa)) enclose the BRCT domain.

Belongs to the NAD-dependent DNA ligase family. LigA subfamily. Mg(2+) is required as a cofactor. The cofactor is Mn(2+).

The enzyme catalyses NAD(+) + (deoxyribonucleotide)n-3'-hydroxyl + 5'-phospho-(deoxyribonucleotide)m = (deoxyribonucleotide)n+m + AMP + beta-nicotinamide D-nucleotide.. DNA ligase that catalyzes the formation of phosphodiester linkages between 5'-phosphoryl and 3'-hydroxyl groups in double-stranded DNA using NAD as a coenzyme and as the energy source for the reaction. It is essential for DNA replication and repair of damaged DNA. In Haemophilus influenzae (strain ATCC 51907 / DSM 11121 / KW20 / Rd), this protein is DNA ligase.